Here is a 515-residue protein sequence, read N- to C-terminus: 2-isopropylmalate synthase (515 aa).

Positions 4 to 266 (IKFFDTTLRD…ETRLNLQEIK (263 aa)) constitute a Pyruvate carboxyltransferase domain. Residues Asp-13, His-201, His-203, and Asn-237 each contribute to the Mn(2+) site. A regulatory domain region spans residues 391-515 (QLSSIQVQYG…RAENEKVATS (125 aa)).

The protein belongs to the alpha-IPM synthase/homocitrate synthase family. LeuA type 1 subfamily. As to quaternary structure, homodimer. It depends on Mn(2+) as a cofactor.

It localises to the cytoplasm. It catalyses the reaction 3-methyl-2-oxobutanoate + acetyl-CoA + H2O = (2S)-2-isopropylmalate + CoA + H(+). Its pathway is amino-acid biosynthesis; L-leucine biosynthesis; L-leucine from 3-methyl-2-oxobutanoate: step 1/4. Catalyzes the condensation of the acetyl group of acetyl-CoA with 3-methyl-2-oxobutanoate (2-ketoisovalerate) to form 3-carboxy-3-hydroxy-4-methylpentanoate (2-isopropylmalate). This Geobacillus stearothermophilus (Bacillus stearothermophilus) protein is 2-isopropylmalate synthase.